Here is a 95-residue protein sequence, read N- to C-terminus: RING finger protein Z (95 aa).

Residue Gly2 is the site of N-myristoyl glycine; by host attachment. The RING-type; atypical zinc-finger motif lies at 38–74 (CKRCWFATKGLIACSDHYLCLNCLTIMLSDGNFCEVC). The PTAP/PSAP motif motif lies at 88–91 (PSAP).

This sequence belongs to the arenaviridae Z protein family. Interacts with protein NP; this interaction probably directs the encapsidated genome to budding sites. Interacts (via RING domain) with polymerase L; this interaction inhibits viral transcription and replication, Z partially blocks the product exit tunnel for the releasing nascent RNA product. Interacts with the glycoprotein complex; this interaction plays a role in virion budding. Interacts with host eIF4E; this interaction results in eIF4E reduced affinity for its substrate, the 5'-m7 G cap structure. Interacts (via late-budding domain) with host TSG101; this interaction is essential for budding and release of viral particles. Interacts with host RPLP0; this interaction may serve to load ribosome-like particles inside the virion. Interacts with host PML; this interaction induces PML bodies redistribution in the cytoplasm upon viral infection. Post-translationally, myristoylation is required for the role of RING finger protein Z in assembly and budding.

The protein localises to the virion. The protein resides in the host cytoplasm. Its subcellular location is the host perinuclear region. It localises to the host cell membrane. In terms of biological role, plays a crucial role in virion assembly and budding. Expressed late in the virus life cycle, it acts as an inhibitor of viral transcription and RNA synthesis by interacting with the viral polymerase L. Presumably recruits the NP encapsidated genome to cellular membranes at budding sites via direct interaction with NP. Plays critical roles in the final steps of viral release by interacting with host TSG101, a member of the vacuolar protein-sorting pathway and using other cellular host proteins involved in vesicle formation pathway. The budding of the virus progeny occurs after association of protein Z with the viral glycoprotein complex SSP-GP1-GP2 at the cell periphery, step that requires myristoylation of protein Z. Also selectively represses protein production by associating with host eIF4E. In cell-based minigenome assay, has an inhibitory effect on the ribonucleoprotein machinery (vRNP), which is responsible for the replication and transcription of the viral genome. This is RING finger protein Z from Sooretamys angouya (Paraguayan rice rat).